The chain runs to 196 residues: Large ribosomal subunit protein bL25 (196 aa).

A disordered region spans residues 177 to 196 (VISIAPPKKDAEAETESAAG).

It belongs to the bacterial ribosomal protein bL25 family. CTC subfamily. As to quaternary structure, part of the 50S ribosomal subunit; part of the 5S rRNA/L5/L18/L25 subcomplex. Contacts the 5S rRNA. Binds to the 5S rRNA independently of L5 and L18.

Its function is as follows. This is one of the proteins that binds to the 5S RNA in the ribosome where it forms part of the central protuberance. In Chlorobium limicola (strain DSM 245 / NBRC 103803 / 6330), this protein is Large ribosomal subunit protein bL25.